The chain runs to 116 residues: Small ribosomal subunit protein eS24 (116 aa).

Residues 81–116 form a disordered region; sequence IEPEHMVERHKKVLEELESESEESEESESEESEEEE. Residues 96 to 116 are compositionally biased toward acidic residues; the sequence is ELESESEESEESESEESEEEE.

This sequence belongs to the eukaryotic ribosomal protein eS24 family.

In Methanopyrus kandleri (strain AV19 / DSM 6324 / JCM 9639 / NBRC 100938), this protein is Small ribosomal subunit protein eS24.